The sequence spans 591 residues: Protein misato homolog 1 (591 aa).

This sequence belongs to the misato family.

It localises to the mitochondrion outer membrane. Its subcellular location is the cytoplasm. Involved in the regulation of mitochondrial distribution and morphology. Required for mitochondrial fusion and mitochondrial network formation. This chain is Protein misato homolog 1 (msto1), found in Danio rerio (Zebrafish).